We begin with the raw amino-acid sequence, 366 residues long: A-type ATP synthase subunit C (366 aa).

It belongs to the V-ATPase V0D/AC39 subunit family. As to quaternary structure, has multiple subunits with at least A(3), B(3), C, D, E, F, H, I and proteolipid K(x).

Its subcellular location is the cell membrane. Its function is as follows. Component of the A-type ATP synthase that produces ATP from ADP in the presence of a proton gradient across the membrane. The polypeptide is A-type ATP synthase subunit C (Thermococcus gammatolerans (strain DSM 15229 / JCM 11827 / EJ3)).